We begin with the raw amino-acid sequence, 85 residues long: uncharacterized protein (85 aa).

It to A.fulgidus AF_0255 and AF_1363.

This is an uncharacterized protein from Archaeoglobus fulgidus (strain ATCC 49558 / DSM 4304 / JCM 9628 / NBRC 100126 / VC-16).